The sequence spans 337 residues: Putative tRNA (cytidine(32)/guanosine(34)-2'-O)-methyltransferase (337 aa).

Residues glycine 53, tryptophan 55, aspartate 76, aspartate 92, and aspartate 117 each contribute to the S-adenosyl-L-methionine site. Residue lysine 157 is the Proton acceptor of the active site. Basic and acidic residues-rich tracts occupy residues leucine 304–proline 318 and glutamate 327–leucine 337. Positions leucine 304–leucine 337 are disordered.

Belongs to the class I-like SAM-binding methyltransferase superfamily. RNA methyltransferase RlmE family. TRM7 subfamily.

It is found in the cytoplasm. It catalyses the reaction cytidine(32)/guanosine(34) in tRNA + 2 S-adenosyl-L-methionine = 2'-O-methylcytidine(32)/2'-O-methylguanosine(34) in tRNA + 2 S-adenosyl-L-homocysteine + 2 H(+). Methylates the 2'-O-ribose of nucleotides at positions 32 and 34 of the tRNA anticodon loop of substrate tRNAs. The chain is Putative tRNA (cytidine(32)/guanosine(34)-2'-O)-methyltransferase from Caenorhabditis elegans.